A 511-amino-acid chain; its full sequence is Glucans biosynthesis protein G (511 aa).

A signal peptide spans 1-22; that stretch reads MMKMRWLSAAVMLTLYTSSSWA.

This sequence belongs to the OpgD/OpgG family.

The protein resides in the periplasm. It functions in the pathway glycan metabolism; osmoregulated periplasmic glucan (OPG) biosynthesis. Functionally, involved in the biosynthesis of osmoregulated periplasmic glucans (OPGs). This is Glucans biosynthesis protein G from Escherichia coli O81 (strain ED1a).